The chain runs to 203 residues: Large ribosomal subunit protein uL13 (203 aa).

The residue at position 2 (alanine 2) is an N-acetylalanine. Position 59 is a citrulline (arginine 59). Serine 77 is modified (phosphoserine). Citrulline is present on arginine 140. Lysine 191 carries the N6-acetyllysine modification.

This sequence belongs to the universal ribosomal protein uL13 family. As to quaternary structure, component of the 60S ribosome. Component of the GAIT complex. Interacts with EIF4G1. Phosphorylation at Ser-77 upon interferon-gamma treatment in macrophages involves a DAPK1-DAPK3 kinase cascade and is causing release from the ribosome, association with the GAIT complex and subsequent involvement in transcript-selective translation inhibition. In terms of processing, citrullinated by PADI4.

It is found in the cytoplasm. Associated with ribosomes but is not required for canonical ribosome function and has extra-ribosomal functions. Component of the GAIT (gamma interferon-activated inhibitor of translation) complex which mediates interferon-gamma-induced transcript-selective translation inhibition in inflammation processes. Upon interferon-gamma activation and subsequent phosphorylation dissociates from the ribosome and assembles into the GAIT complex which binds to stem loop-containing GAIT elements in the 3'-UTR of diverse inflammatory mRNAs (such as ceruplasmin) and suppresses their translation. In the GAIT complex interacts with m7G cap-bound eIF4G at or near the eIF3-binding site and blocks the recruitment of the 43S ribosomal complex. Involved in methylation of rRNA. This is Large ribosomal subunit protein uL13 (RPL13A) from Bos taurus (Bovine).